Reading from the N-terminus, the 288-residue chain is MGNLFCCVQVDQSTVAIREQFGKFDAVLEPGCHCLPWFAGKRIAGHLTLRLQQLDVRCETKTKDNVFVNVVASIQYRALAGKANDAFYKLSNTRSQIQAYVFDVIRASVPKLNLDDAFEQKNDIAKAVEDELEKAMSAYGFEIVQTLIVDIEPDEHVKRAMNEINAAARLRVAANEKAEAEKIVQIKRAEGEAEAKYLSGLGIARQRQAIVDGLRDSVLGFSVNVPGTTAKDVMDMVLITQYFDTMKEIGASSKASSVFIPHGPGAVRDIATQIRDGLLQGQATTTSH.

Residue Gly-2 is the site of N-myristoyl glycine attachment.

Its function is as follows. Positive regulator of hypersensitive response (HR)-like cell death. May be involved in potassium ion channel regulation. The sequence is that of Hypersensitive-induced response protein-like protein 1 from Oryza sativa subsp. japonica (Rice).